A 689-amino-acid chain; its full sequence is DNA ligase (689 aa).

NAD(+)-binding positions include 40 to 44, 89 to 90, and Glu-121; these read DSEYD and SL. Lys-123 serves as the catalytic N6-AMP-lysine intermediate. Arg-144, Glu-179, Lys-295, and Lys-319 together coordinate NAD(+). Residues Cys-413, Cys-416, Cys-431, and Cys-437 each coordinate Zn(2+). The region spanning 610-689 is the BRCT domain; it reads REQNILTGKI…VEWLAFIKNA (80 aa).

It belongs to the NAD-dependent DNA ligase family. LigA subfamily. The cofactor is Mg(2+). Mn(2+) serves as cofactor.

The catalysed reaction is NAD(+) + (deoxyribonucleotide)n-3'-hydroxyl + 5'-phospho-(deoxyribonucleotide)m = (deoxyribonucleotide)n+m + AMP + beta-nicotinamide D-nucleotide.. In terms of biological role, DNA ligase that catalyzes the formation of phosphodiester linkages between 5'-phosphoryl and 3'-hydroxyl groups in double-stranded DNA using NAD as a coenzyme and as the energy source for the reaction. It is essential for DNA replication and repair of damaged DNA. The protein is DNA ligase of Rickettsia prowazekii (strain Madrid E).